The sequence spans 308 residues: S-adenosylmethionine-dependent nucleotide dehydratase (308 aa).

One can recognise a Radical SAM core domain in the interval Ser-7–Glu-253. Positions 21, 25, and 28 each coordinate [4Fe-4S] cluster.

Belongs to the radical SAM superfamily. Viperin family. It depends on [4Fe-4S] cluster as a cofactor.

The enzyme catalyses CTP + AH2 + S-adenosyl-L-methionine = 3'-deoxy-3',4'-didehydro-CTP + 5'-deoxyadenosine + L-methionine + A + H2O + H(+). The catalysed reaction is GTP + AH2 + S-adenosyl-L-methionine = 3'-deoxy-3',4'-didehydro-GTP + 5'-deoxyadenosine + L-methionine + A + H2O + H(+). It catalyses the reaction UTP + AH2 + S-adenosyl-L-methionine = 3'-deoxy-3',4'-didehydro-UTP + 5'-deoxyadenosine + L-methionine + A + H2O + H(+). Its function is as follows. Expression of pVip58 in E.coli (strain MG1655) confers resistance to phages lambda, P1 and T7; delays culture collapse upon infection with T7. Catalyzes the conversion of cytidine triphosphate (CTP) to 3'-deoxy-3',4'-didehydro-CTP (ddhCTP), guanosine triphosphate (GTP) to 3'-deoxy-3',4'-didehydro-GTP (ddhGTP) and uridine triphosphate (UTP) to 3'-deoxy-3',4'-didehydro-UTP (ddhUTP), probably via a SAM-dependent radical mechanism. The modified nucleotide represses transcription from T7 RNA polymerase-directed genes (possibly by acting as chain terminators), strongly suggesting these nucleotides block viral polymerase transcription. This is S-adenosylmethionine-dependent nucleotide dehydratase from Pseudoalteromonas ulvae.